The following is a 201-amino-acid chain: Dephospho-CoA kinase (201 aa).

The DPCK domain occupies 3-201 (VIGLTGGIAS…WKERIEKNPR (199 aa)). Residue 11 to 16 (ASGKST) participates in ATP binding.

It belongs to the CoaE family.

The protein resides in the cytoplasm. The catalysed reaction is 3'-dephospho-CoA + ATP = ADP + CoA + H(+). It participates in cofactor biosynthesis; coenzyme A biosynthesis; CoA from (R)-pantothenate: step 5/5. Catalyzes the phosphorylation of the 3'-hydroxyl group of dephosphocoenzyme A to form coenzyme A. The protein is Dephospho-CoA kinase of Geobacter metallireducens (strain ATCC 53774 / DSM 7210 / GS-15).